A 128-amino-acid chain; its full sequence is MDAVPLATPEEAWRIAKSLNYRHIGGTVVAVVQDVETGEVLMVGHMDPVAVVLTLTTGLAHYYSTSRKRIWLKGETSGHYQIVKEFRTDCDGDAVVLKVVQIGAACHTGARSCFSSPASFKIRLNRDA.

Asp89 lines the Mg(2+) pocket. A Zn(2+)-binding site is contributed by Cys90. Mg(2+) is bound by residues Asp91 and Asp93. Positions 106 and 113 each coordinate Zn(2+).

It belongs to the PRA-CH family. As to quaternary structure, homodimer. It depends on Mg(2+) as a cofactor. Requires Zn(2+) as cofactor.

It is found in the cytoplasm. The catalysed reaction is 1-(5-phospho-beta-D-ribosyl)-5'-AMP + H2O = 1-(5-phospho-beta-D-ribosyl)-5-[(5-phospho-beta-D-ribosylamino)methylideneamino]imidazole-4-carboxamide. It participates in amino-acid biosynthesis; L-histidine biosynthesis; L-histidine from 5-phospho-alpha-D-ribose 1-diphosphate: step 3/9. Catalyzes the hydrolysis of the adenine ring of phosphoribosyl-AMP. This Pyrobaculum calidifontis (strain DSM 21063 / JCM 11548 / VA1) protein is Phosphoribosyl-AMP cyclohydrolase.